Reading from the N-terminus, the 311-residue chain is tRNA dimethylallyltransferase (311 aa).

10–17 (GPTASGKT) is an ATP binding site. Substrate is bound at residue 12–17 (TASGKT). Interaction with substrate tRNA regions lie at residues 35 to 38 (DSAL), 159 to 163 (QRINR), and 240 to 245 (RCVGYR).

The protein belongs to the IPP transferase family. Monomer. Requires Mg(2+) as cofactor.

It carries out the reaction adenosine(37) in tRNA + dimethylallyl diphosphate = N(6)-dimethylallyladenosine(37) in tRNA + diphosphate. Catalyzes the transfer of a dimethylallyl group onto the adenine at position 37 in tRNAs that read codons beginning with uridine, leading to the formation of N6-(dimethylallyl)adenosine (i(6)A). The chain is tRNA dimethylallyltransferase from Haemophilus influenzae (strain PittEE).